Here is a 587-residue protein sequence, read N- to C-terminus: Chaperonin GroEL 1 (587 aa).

ATP contacts are provided by residues 29-32, 86-90, Gly413, and Asp492; these read TIGP and DGTTT.

Belongs to the chaperonin (HSP60) family. As to quaternary structure, forms a cylinder of 14 subunits composed of two heptameric rings stacked back-to-back. Interacts with the co-chaperonin GroES.

The protein resides in the cytoplasm. It catalyses the reaction ATP + H2O + a folded polypeptide = ADP + phosphate + an unfolded polypeptide.. Its function is as follows. Together with its co-chaperonin GroES, plays an essential role in assisting protein folding. The GroEL-GroES system forms a nano-cage that allows encapsulation of the non-native substrate proteins and provides a physical environment optimized to promote and accelerate protein folding. The chain is Chaperonin GroEL 1 from Prochlorococcus marinus (strain MIT 9515).